The following is a 381-amino-acid chain: MSRHEGVSCDACLKGNFRGRRYKCLICYDYDLCASCYESGATTTRHTTDHPMQCILTRVDFDLYYGGEAFSVEQPQSFTCPYCGKMGYTETSLQEHVTSEHAETSTEVICPICAALPGGDPNHVTDDFAAHLTLEHRAPRDLDESSGVRHVRRMFHPGRGLGGPRARRSNMHFTSSSTGGLSSSQSSYSPSSREAMDPIAELLSQLSGVRRSAGGQLNSSGPSASQLQQLQMQLQLERQHAQAARQQLETARNASRRTNTSSVTTTITQATATANTANTENSPQALHNSQFLLTRLNDPKMSEAERQSMESERADRSLFVQELLLSTLVREESSSSDEDDRGEMADFGAMGCVDIMPLDVALENLNLKESNKGNEPPPPPL.

N-acetylserine is present on S2. S2 is modified (phosphoserine). A ZZ-type zinc finger spans residues 4–60; sequence HEGVSCDACLKGNFRGRRYKCLICYDYDLCASCYESGATTTRHTTDHPMQCILTRVD. Residues C9, C12, C24, C27, C33, C36, H46, and H50 each contribute to the Zn(2+) site. A C2H2-type zinc finger spans residues 78–101; sequence FTCPYCGKMGYTETSLQEHVTSEH. Residues 154 to 194 form a disordered region; the sequence is MFHPGRGLGGPRARRSNMHFTSSSTGGLSSSQSSYSPSSRE. 3 positions are modified to phosphoserine: S169, S189, and S212. Residues 175–192 show a composition bias toward low complexity; the sequence is SSSTGGLSSSQSSYSPSS. Positions 224-259 form a coiled coil; the sequence is ASQLQQLQMQLQLERQHAQAARQQLETARNASRRTN. 2 positions are modified to phosphoserine: S335 and S336.

Belongs to the KCMF1 family. As to quaternary structure, component of the SIFI complex, composed of KCMF1, UBR4 and calmodulin (CALM1, CALM2 or CALM3). Testis, liver, kidney, heart and skeletal muscle.

It localises to the cytoplasm. It is found in the late endosome. The protein resides in the lysosome. It carries out the reaction S-ubiquitinyl-[E2 ubiquitin-conjugating enzyme]-L-cysteine + [acceptor protein]-L-lysine = [E2 ubiquitin-conjugating enzyme]-L-cysteine + N(6)-ubiquitinyl-[acceptor protein]-L-lysine.. The protein operates within protein modification; protein ubiquitination. E3 ubiquitin-protein ligase which accepts ubiquitin from an E2 ubiquitin-conjugating enzyme and then transfers it to targeted substrates, promoting their degradation by the proteasome. Together with UBR4, component of the N-end rule pathway: ubiquitinates proteins bearing specific N-terminal residues that are destabilizing according to the N-end rule, leading to their degradation. Does not ubiquitinate proteins that are acetylated at the N-terminus. Together with UBR4, part of a protein quality control pathway that catalyzes ubiquitination and degradation of proteins that have been oxidized in response to reactive oxygen species (ROS): recognizes proteins with an Arg-CysO3(H) degron at the N-terminus, and mediates assembly of heterotypic 'Lys-63'-/'Lys-27'-linked branched ubiquitin chains on oxidized proteins, leading to their degradation by autophagy. Catalytic component of the SIFI complex, a multiprotein complex required to inhibit the mitochondrial stress response after a specific stress event has been resolved: ubiquitinates and degrades (1) components of the HRI-mediated signaling of the integrated stress response, such as DELE1 and EIF2AK1/HRI, as well as (2) unimported mitochondrial precursors. Within the SIFI complex, UBR4 initiates ubiquitin chain that are further elongated or branched by KCMF1. In Mus musculus (Mouse), this protein is E3 ubiquitin-protein ligase KCMF1.